Reading from the N-terminus, the 79-residue chain is Conotoxin VnMSGL-0122 (79 aa).

Residues 1–20 form the signal peptide; it reads MSGLGIMVLALLLLVFMATS. Residues 21 to 44 constitute a propeptide that is removed on maturation; it reads HQDGGGKQATQRDAINVRRRRSIT. 3 disulfide bridges follow: cysteine 52–cysteine 64, cysteine 56–cysteine 73, and cysteine 63–cysteine 77. Leucine 78 carries the post-translational modification Leucine amide.

It belongs to the conotoxin O3 superfamily. Expressed by the venom duct.

Its subcellular location is the secreted. This Conus ventricosus (Mediterranean cone) protein is Conotoxin VnMSGL-0122.